Consider the following 938-residue polypeptide: AP-4 complex subunit epsilon (938 aa).

HEAT repeat units follow at residues 118-153 (DLII…INEE), 154-190 (TIPA…KSPS), 192-227 (VSHL…EDVN), 234-272 (SSFV…IMAL), 321-358 (KLLE…ISPD), 359-395 (IAEQ…SSNV), 397-431 (VIVD…QFAP), 454-495 (KVAH…EPKL), 517-556 (YSAS…FEIA), and 562-601 (DVLP…RAVE). Disordered stretches follow at residues 690–712 (EPSY…RESS), 725–867 (WGRP…VMGL), 880–912 (VDSL…KEAL), and 919–938 (RQMG…DLLG). Over residues 694–706 (YSESHQPISTSLV) the composition is skewed to polar residues. Low complexity predominate over residues 728–744 (PSYQSTTAASSTTPQAA). Over residues 764 to 779 (SSYEPKKPEIDPEKQR) the composition is skewed to basic and acidic residues. Residues 808–821 (ANKTATVPKENQTP) are compositionally biased toward polar residues. Composition is skewed to low complexity over residues 853–863 (DSSSQDGGSSD) and 880–891 (VDSLLSELSDSS). The stretch at 874-911 (VTTTTSVDSLLSELSDSSKGNSRTYQPQTSKGPNTKEA) is one HEAT 11 repeat. Positions 892-906 (KGNSRTYQPQTSKGP) are enriched in polar residues.

Belongs to the adaptor complexes large subunit family. In terms of assembly, adaptor protein complex 4 (AP-4) is a heterotetramer composed of two large adaptins (epsilon-type subunit and beta-type subunit), a medium adaptin (mu-type subunit) and a small adaptin (sigma-type subunit).

It is found in the golgi apparatus. The protein localises to the trans-Golgi network. The protein resides in the membrane. Its subcellular location is the coated pit. Functionally, subunit of novel type of clathrin- or non-clathrin-associated protein coat involved in targeting proteins from the trans-Golgi network (TGN) to the endosomal-lysosomal system. In Arabidopsis thaliana (Mouse-ear cress), this protein is AP-4 complex subunit epsilon.